The sequence spans 226 residues: Leucyl/phenylalanyl-tRNA--protein transferase (226 aa).

Belongs to the L/F-transferase family.

It localises to the cytoplasm. The catalysed reaction is N-terminal L-lysyl-[protein] + L-leucyl-tRNA(Leu) = N-terminal L-leucyl-L-lysyl-[protein] + tRNA(Leu) + H(+). The enzyme catalyses N-terminal L-arginyl-[protein] + L-leucyl-tRNA(Leu) = N-terminal L-leucyl-L-arginyl-[protein] + tRNA(Leu) + H(+). It catalyses the reaction L-phenylalanyl-tRNA(Phe) + an N-terminal L-alpha-aminoacyl-[protein] = an N-terminal L-phenylalanyl-L-alpha-aminoacyl-[protein] + tRNA(Phe). Functions in the N-end rule pathway of protein degradation where it conjugates Leu, Phe and, less efficiently, Met from aminoacyl-tRNAs to the N-termini of proteins containing an N-terminal arginine or lysine. This Pseudomonas fluorescens (strain SBW25) protein is Leucyl/phenylalanyl-tRNA--protein transferase.